Consider the following 200-residue polypeptide: LHFPL tetraspan subfamily member 7 protein (200 aa).

Helical transmembrane passes span 5-27, 68-88, 113-133, and 150-170; these read VWVA…PAWF, VSAV…IFLL, AATA…SPFI, and LGWG…LPII.

Belongs to the TMEM211 family.

The protein resides in the membrane. The polypeptide is LHFPL tetraspan subfamily member 7 protein (Homo sapiens (Human)).